The sequence spans 161 residues: Nucleotide-binding protein Shew185_3601 (161 aa).

This sequence belongs to the YajQ family.

Nucleotide-binding protein. The polypeptide is Nucleotide-binding protein Shew185_3601 (Shewanella baltica (strain OS185)).